A 164-amino-acid polypeptide reads, in one-letter code: Large ribosomal subunit protein bL21 (164 aa).

Residues 105 to 164 (KAPTIGPRAKKEKKVEAAPADGEAPAKKAPAKKAAAKKAAPKAAAKKAPAKKAAPKAKSE) are disordered. Basic residues predominate over residues 133–164 (APAKKAAAKKAAPKAAAKKAPAKKAAPKAKSE).

This sequence belongs to the bacterial ribosomal protein bL21 family. As to quaternary structure, part of the 50S ribosomal subunit. Contacts protein L20.

Functionally, this protein binds to 23S rRNA in the presence of protein L20. The polypeptide is Large ribosomal subunit protein bL21 (Afipia carboxidovorans (strain ATCC 49405 / DSM 1227 / KCTC 32145 / OM5) (Oligotropha carboxidovorans)).